The following is a 225-amino-acid chain: Uracil-DNA glycosylase (225 aa).

The active-site Proton acceptor is Asp-65.

Belongs to the uracil-DNA glycosylase (UDG) superfamily. UNG family.

Its subcellular location is the cytoplasm. The enzyme catalyses Hydrolyzes single-stranded DNA or mismatched double-stranded DNA and polynucleotides, releasing free uracil.. Its function is as follows. Excises uracil residues from the DNA which can arise as a result of misincorporation of dUMP residues by DNA polymerase or due to deamination of cytosine. In Clostridium perfringens (strain SM101 / Type A), this protein is Uracil-DNA glycosylase.